Consider the following 594-residue polypeptide: Kelch domain-containing protein 7B (594 aa).

Residues 1-174 are disordered; that stretch reads MVLRSHPFPR…PAGRSGALTE (174 aa). Gly residues predominate over residues 49–58; that stretch reads IGTGTGGLVE. Polar residues predominate over residues 64-74; the sequence is QPRSSETNGSP. A compositionally biased stretch (pro residues) spans 104 to 115; sequence PAQPPAQRPPGP. A compositionally biased stretch (low complexity) spans 116–126; it reads AASSSARRSQP. 5 Kelch repeats span residues 306–354, 355–405, 406–448, 451–493, and 495–538; these read EEPP…TMHN, YLFL…ALDG, LLYA…AVAC, DIYV…ALGG, and LYRF…TTLG.

This Homo sapiens (Human) protein is Kelch domain-containing protein 7B (KLHDC7B).